The primary structure comprises 157 residues: Small ribosomal subunit protein uS7 (157 aa).

The protein belongs to the universal ribosomal protein uS7 family. In terms of assembly, part of the 30S ribosomal subunit. Contacts proteins S9 and S11.

In terms of biological role, one of the primary rRNA binding proteins, it binds directly to 16S rRNA where it nucleates assembly of the head domain of the 30S subunit. Is located at the subunit interface close to the decoding center, probably blocks exit of the E-site tRNA. The chain is Small ribosomal subunit protein uS7 from Salinibacter ruber (strain DSM 13855 / M31).